Consider the following 267-residue polypeptide: B3 domain-containing protein At3g11580 (267 aa).

The TF-B3 DNA-binding region spans 29-143; sequence FEKSLTPSDV…RLFIGWRRRG (115 aa).

Its subcellular location is the nucleus. This Arabidopsis thaliana (Mouse-ear cress) protein is B3 domain-containing protein At3g11580 (ARF32).